Reading from the N-terminus, the 128-residue chain is Histone H2A (128 aa).

The segment at Met1–Ala22 is disordered. Ser2 is modified (N-acetylserine). The residue at position 2 (Ser2) is a Phosphoserine. An N6-(2-hydroxyisobutyryl)lysine modification is found at Lys6. Lys6 bears the N6-acetyllysine mark. Over residues Thr7 to Ser19 the composition is skewed to basic residues. Lys10 bears the N6-(2-hydroxyisobutyryl)lysine; alternate mark. Lys10 bears the N6-lactoyllysine; alternate mark. N6-succinyllysine is present on Lys10. Glycyl lysine isopeptide (Lys-Gly) (interchain with G-Cter in ubiquitin) cross-links involve residues Lys14 and Lys16. N6-(2-hydroxyisobutyryl)lysine; alternate is present on Lys37. An N6-(2-hydroxyisobutyryl)lysine mark is found at Lys75 and Lys76. The residue at position 96 (Lys96) is an N6-(2-hydroxyisobutyryl)lysine; alternate. Residue Lys96 is modified to N6-succinyllysine. Lys96 carries the post-translational modification N6-glutaryllysine; alternate. The residue at position 105 (Gln105) is an N5-methylglutamine. Position 119 is an N6-(2-hydroxyisobutyryl)lysine; alternate (Lys119). Residues Lys119, Lys120, and Lys126 each carry the N6-glutaryllysine; alternate modification. Lys120 participates in a covalent cross-link: Glycyl lysine isopeptide (Lys-Gly) (interchain with G-Cter in ubiquitin).

In terms of assembly, the nucleosome is a histone octamer containing two molecules each of H2A, H2B, H3 and H4 assembled in one H3-H4 heterotetramer and two H2A-H2B heterodimers. The octamer wraps approximately 147 bp of DNA. In terms of processing, monoubiquitination of Lys-120 (H2AK119Ub) gives a specific tag for epigenetic transcriptional repression. Following DNA double-strand breaks (DSBs), it is ubiquitinated through 'Lys-63' linkage of ubiquitin moieties, leading to the recruitment of repair proteins to sites of DNA damage. H2AK119Ub and ionizing radiation-induced 'Lys-63'-linked ubiquitination are distinct events. Post-translationally, phosphorylation on Ser-2 is enhanced during mitosis. Phosphorylation on Ser-2 directly represses transcription. Glutamine methylation at Gln-105 (H2AQ104me) by FBL is specifically dedicated to polymerase I. It is present at 35S ribosomal DNA locus and impairs binding of the FACT complex. As to expression, expressed and secreted by skin epithelium.

The protein localises to the nucleus. It is found in the chromosome. In terms of biological role, core component of nucleosome. Nucleosomes wrap and compact DNA into chromatin, limiting DNA accessibility to the cellular machineries which require DNA as a template. Histones thereby play a central role in transcription regulation, DNA repair, DNA replication and chromosomal stability. DNA accessibility is regulated via a complex set of post-translational modifications of histones, also called histone code, and nucleosome remodeling. Functionally, the secreted form has antibacterial activity against Gram-positive bacteria and antifungal activity against S.cerevisiae. The chain is Histone H2A from Oncorhynchus mykiss (Rainbow trout).